A 101-amino-acid polypeptide reads, in one-letter code: Small ribosomal subunit protein uS14 (101 aa).

This sequence belongs to the universal ribosomal protein uS14 family. As to quaternary structure, part of the 30S ribosomal subunit. Contacts proteins S3 and S10.

In terms of biological role, binds 16S rRNA, required for the assembly of 30S particles and may also be responsible for determining the conformation of the 16S rRNA at the A site. In Actinobacillus pleuropneumoniae serotype 3 (strain JL03), this protein is Small ribosomal subunit protein uS14.